Reading from the N-terminus, the 423-residue chain is Type II methyltransferase M.NlaIV (423 aa).

The 420-residue stretch at 4–423 (IKFIDLFSGM…AVSERLLHTL (420 aa)) folds into the SAM-dependent MTase C5-type domain. Residue Cys-80 is part of the active site.

It belongs to the class I-like SAM-binding methyltransferase superfamily. C5-methyltransferase family.

It catalyses the reaction a 2'-deoxycytidine in DNA + S-adenosyl-L-methionine = a 5-methyl-2'-deoxycytidine in DNA + S-adenosyl-L-homocysteine + H(+). In terms of biological role, a methylase that recognizes the double-stranded sequence 5'-GGNNCC-3', methylates C-? on both strands, and protects the DNA from cleavage by the NlaIV endonuclease. In Neisseria lactamica, this protein is Type II methyltransferase M.NlaIV (nlaIVM).